Reading from the N-terminus, the 586-residue chain is Acetylcholinesterase (586 aa).

A signal peptide spans 1–21 (MNLLVTSSLGVLLHLVVLCQA). An N-linked (GlcNAc...) asparagine glycan is attached at Asn80. A disulfide bond links Cys88 and Cys115. The active-site Acyl-ester intermediate is the Ser221. The cysteines at positions 275 and 286 are disulfide-linked. The active-site Charge relay system is Glu348. An intrachain disulfide couples Cys423 to Cys542. The N-linked (GlcNAc...) asparagine glycan is linked to Asn437. Residue His461 is the Charge relay system of the active site. Residues Asn478 and Asn554 are each glycosylated (N-linked (GlcNAc...) asparagine). Ser564 carries GPI-anchor amidated serine lipidation. The propeptide at 565 to 586 (SGTSSSKGIIFYVLFSILYLIF) is removed in mature form.

This sequence belongs to the type-B carboxylesterase/lipase family. As to quaternary structure, isoform H form is a homodimer; the asymmetric form is a disulfide-bonded oligomer composed of a collagenic subunit (Q) and a variable number of T catalytic subunits. An interchain disulfide bond is present in what becomes position 593 of the T isoform. In terms of tissue distribution, found in the synapses and to a lower extent in extrajunctional areas of muscle and nerve, and on erythrocyte membranes.

It localises to the cell membrane. The protein resides in the synapse. The catalysed reaction is acetylcholine + H2O = choline + acetate + H(+). Its activity is regulated as follows. Inhibited by substrate concentrations above 0.5 mM. Functionally, terminates signal transduction at the neuromuscular junction by rapid hydrolysis of the acetylcholine released into the synaptic cleft. May be involved in cell-cell interactions. The chain is Acetylcholinesterase (ache) from Tetronarce californica (Pacific electric ray).